Consider the following 295-residue polypeptide: Pyridoxal 5'-phosphate synthase subunit PdxS (295 aa).

Asp-23 serves as a coordination point for D-ribose 5-phosphate. Lys-80 acts as the Schiff-base intermediate with D-ribose 5-phosphate in catalysis. A D-ribose 5-phosphate-binding site is contributed by Gly-152. Arg-164 is a binding site for D-glyceraldehyde 3-phosphate. D-ribose 5-phosphate is bound by residues Gly-213 and 234-235; that span reads GS.

It belongs to the PdxS/SNZ family. As to quaternary structure, in the presence of PdxT, forms a dodecamer of heterodimers.

It carries out the reaction aldehydo-D-ribose 5-phosphate + D-glyceraldehyde 3-phosphate + L-glutamine = pyridoxal 5'-phosphate + L-glutamate + phosphate + 3 H2O + H(+). The protein operates within cofactor biosynthesis; pyridoxal 5'-phosphate biosynthesis. In terms of biological role, catalyzes the formation of pyridoxal 5'-phosphate from ribose 5-phosphate (RBP), glyceraldehyde 3-phosphate (G3P) and ammonia. The ammonia is provided by the PdxT subunit. Can also use ribulose 5-phosphate and dihydroxyacetone phosphate as substrates, resulting from enzyme-catalyzed isomerization of RBP and G3P, respectively. The polypeptide is Pyridoxal 5'-phosphate synthase subunit PdxS (Methanosphaera stadtmanae (strain ATCC 43021 / DSM 3091 / JCM 11832 / MCB-3)).